We begin with the raw amino-acid sequence, 634 residues long: MSDVSGDGDLSATVTEHEVTPQPPVSSATYPSLTVSASYKESSGGKSSSKRRPIRPSFDAAADNEFITLLHGSDPVKVELNRLENEVRDKDRELGEANAEIKALRLSERQREKAVEELTEELTKLDEKLKLTESILESKNLEIKKINEEKKASMAAQFAAEATLRRVHAAQKDDDMPPIEAILAPLEAELKLARSEIGKLQEDNRALDRLTKSKEAALLEAERTVEAAMAKAAMVDDLQNKNQELMKQIEICQEENKILDRMHRQKVAEVEKLTQTVRELEEAVLAGGAAANAVRDYQRKFQEMNEERKTLDRELARAKVTANRVATVVANEWKDGNDKVMPVKQWLEERRFLQGEMQQLRDKLAITDRAAKSEAQLKEKFQLRLKVLEETLRGTSSSATRNTPEARSMSNGPSRRQSLGGAENLQKFTSNGALSKKAPASQMRHSLSINSTSVLKNAKGTSKSFDGGTRSVDRGKALLNGPGNYSFNKATDDSKEAESGNGWKENSEEKPQSEDPEAATEDSVPGVLYDLLQKEVVSLRKASNEKDQSLKDKDDAIEMLAKKVETLTKAMEVEAKKMRREVAAMEKEVAAMRVEKDQDARAKRFSNSKSPSNTAQILAGRAAGRSGGLTKSTQ.

The tract at residues 1–57 (MSDVSGDGDLSATVTEHEVTPQPPVSSATYPSLTVSASYKESSGGKSSSKRRPIRPS) is disordered. Residues 25-35 (VSSATYPSLTV) are compositionally biased toward polar residues. Residues 36-47 (SASYKESSGGKS) are compositionally biased toward low complexity. Positions 74 to 392 (DPVKVELNRL…LRLKVLEETL (319 aa)) form a coiled coil. The segment at 258-494 (ILDRMHRQKV…YSFNKATDDS (237 aa)) is required for targeting to microtubules. Composition is skewed to polar residues over residues 393–417 (RGTS…SRRQ) and 443–464 (MRHS…TSKS). Disordered stretches follow at residues 393-526 (RGTS…SVPG) and 594-634 (VEKD…KSTQ). Residues 532–601 (LQKEVVSLRK…MRVEKDQDAR (70 aa)) are a coiled coil. Over residues 605–616 (FSNSKSPSNTAQ) the composition is skewed to polar residues.

The protein belongs to the MAP70 family.

It is found in the cytoplasm. Its subcellular location is the cytoskeleton. Plant-specific protein that interact with microtubules. In Arabidopsis thaliana (Mouse-ear cress), this protein is Microtubule-associated protein 70-2 (MAP70.2).